The chain runs to 326 residues: Intracellular serine protease (326 aa).

A Peptidase S8 domain is found at 23–303; the sequence is PRGVEMIQAP…NGLLYLTAVE (281 aa). Active-site charge relay system residues include Asp49, His86, and Ser244.

This sequence belongs to the peptidase S8 family.

Functionally, involved in the generation of beta- and alpha-amylases from the large amylase precursor. The sequence is that of Intracellular serine protease (isp) from Paenibacillus polymyxa (Bacillus polymyxa).